Here is a 364-residue protein sequence, read N- to C-terminus: FNIP repeat-containing protein DDB_G0277323 (364 aa).

5 FNIP repeats span residues Met57–Tyr98, Tyr155–Thr198, Leu214–Ser244, Phe245–Ile271, and Phe295–Asn340.

The chain is FNIP repeat-containing protein DDB_G0277323 from Dictyostelium discoideum (Social amoeba).